We begin with the raw amino-acid sequence, 356 residues long: Heme A synthase (356 aa).

5 helical membrane passes run 23–43 (IAIW…VGGV), 105–125 (FHRL…LYFL), 141–161 (IFLL…SGLV), 173–193 (AHLG…LDLL), and 212–232 (STML…VAGI). His-274 is a heme binding site. 3 helical membrane passes run 276 to 296 (LIAW…RAVP), 307 to 327 (LLLI…LLVV), and 329 to 349 (LTLA…ALWV). His-335 contributes to the heme binding site.

Belongs to the COX15/CtaA family. Type 2 subfamily. As to quaternary structure, interacts with CtaB. Heme b serves as cofactor.

It localises to the cell membrane. The enzyme catalyses Fe(II)-heme o + 2 A + H2O = Fe(II)-heme a + 2 AH2. Its pathway is porphyrin-containing compound metabolism; heme A biosynthesis; heme A from heme O: step 1/1. Catalyzes the conversion of heme O to heme A by two successive hydroxylations of the methyl group at C8. The first hydroxylation forms heme I, the second hydroxylation results in an unstable dihydroxymethyl group, which spontaneously dehydrates, resulting in the formyl group of heme A. This is Heme A synthase from Nitrosospira multiformis (strain ATCC 25196 / NCIMB 11849 / C 71).